The chain runs to 184 residues: Elongation factor P (184 aa).

It belongs to the elongation factor P family.

Its subcellular location is the cytoplasm. It participates in protein biosynthesis; polypeptide chain elongation. Functionally, involved in peptide bond synthesis. Stimulates efficient translation and peptide-bond synthesis on native or reconstituted 70S ribosomes in vitro. Probably functions indirectly by altering the affinity of the ribosome for aminoacyl-tRNA, thus increasing their reactivity as acceptors for peptidyl transferase. The protein is Elongation factor P of Delftia acidovorans (strain DSM 14801 / SPH-1).